Reading from the N-terminus, the 151-residue chain is NADH dehydrogenase [ubiquinone] 1 beta subcomplex subunit 11, mitochondrial (151 aa).

The N-terminal 29 residues, 1-29 (MAARLLSLCARRLSVTAAVRGLPAAGVRW), are a transit peptide targeting the mitochondrion. Residues 39–62 (STVERKRQRQPTMHWQEDPESEDE) form a disordered region. A helical transmembrane segment spans residues 87-107 (VVFFFGFSIVLVLGTTFMAYL).

This sequence belongs to the complex I NDUFB11 subunit family. As to quaternary structure, complex I is composed of 45 different subunits. Interacts with BCAP31.

Its subcellular location is the mitochondrion inner membrane. Its function is as follows. Accessory subunit of the mitochondrial membrane respiratory chain NADH dehydrogenase (Complex I), that is believed not to be involved in catalysis. Complex I functions in the transfer of electrons from NADH to the respiratory chain. The immediate electron acceptor for the enzyme is believed to be ubiquinone. This is NADH dehydrogenase [ubiquinone] 1 beta subcomplex subunit 11, mitochondrial (NDUFB11) from Cricetulus griseus (Chinese hamster).